Consider the following 113-residue polypeptide: Large ribosomal subunit protein uL22 (113 aa).

This sequence belongs to the universal ribosomal protein uL22 family. As to quaternary structure, part of the 50S ribosomal subunit.

This protein binds specifically to 23S rRNA; its binding is stimulated by other ribosomal proteins, e.g. L4, L17, and L20. It is important during the early stages of 50S assembly. It makes multiple contacts with different domains of the 23S rRNA in the assembled 50S subunit and ribosome. In terms of biological role, the globular domain of the protein is located near the polypeptide exit tunnel on the outside of the subunit, while an extended beta-hairpin is found that lines the wall of the exit tunnel in the center of the 70S ribosome. This is Large ribosomal subunit protein uL22 from Halalkalibacterium halodurans (strain ATCC BAA-125 / DSM 18197 / FERM 7344 / JCM 9153 / C-125) (Bacillus halodurans).